We begin with the raw amino-acid sequence, 173 residues long: Bacterial deubiquitinase-like protein BilC (173 aa).

Zn(2+)-binding residues include histidine 103, histidine 105, and aspartate 115.

The protein belongs to the M67B family. Requires Zn(2+) as cofactor.

In terms of biological role, component of the Bil (bacterial ISG15-like) antiviral defense system, composed of BilA, BilB, BilC and BilD. The Bil system specifically conjugates a ubiquitin-like moiety (bilA) to the bacteriophage central tail fiber (CTF, or tip attachment protein J) via reactions involving E1 (bilD) and E2 (bilB). Modifies CTF of phage SECphi27 and SECphi4, which probably interferes with assembly of the phage tail. Also modifies T5 baseplate hub protein pb3 (gene D16), but not gp27 of phage T6 (Bil defends against T6). BilC is a probable metalloprotease that may cleave non-specifically conjugated targets. Bil-encoding bacteria produce mostly defective phage SECphi27, many of which have phage assembly defects, including no tails. SECphi27 phage progeny produced in E.coli with the Bil system inject less DNA into naive host cells, maybe because the phage are less able to adsorb and inject their DNA into host cells. Its function is as follows. Expression of the Bil system in E.coli (strain MG1655) confers about 100-fold resistance to phage SECphi27, SECphi18, SECphi6, SECphi4 and T5, but not to SECphi17. When cells expressing the Bil system are infected by phage SECphi27 at low multiplicity of infection (0.03 MOI) the culture survives, at 3.0 MOI the culture collapses at the same time as cells without the Bil system. Cleaves a ubiquitin-GFP (Ubl-GFP) fusion protein in vivo. The chain is Bacterial deubiquitinase-like protein BilC from Collimonas sp. (strain OK412).